Reading from the N-terminus, the 468-residue chain is Nuclear distribution protein PAC1-2 (468 aa).

Residues 13–45 (QAEELHKSIIAYLTSLNLATTANTLRAELNLPE) enclose the LisH domain. A coiled-coil region spans residues 66-92 (SVIRLQKKVLDLQAENAHLKNEIENAG). 8 WD repeats span residues 118-159 (GHRL…RTLK), 161-201 (HTKA…KNIR), 205-251 (GHDH…CVKT), 254-293 (GHND…PECR), 298-358 (GHEN…IKVL), 360-399 (GHDN…KCVQ), 404-429 (MFDG…GDAG), and 430-468 (DGTP…IFAN).

The protein belongs to the WD repeat LIS1/nudF family. In terms of assembly, self-associates. Interacts with NDL1 and dynein.

Its subcellular location is the cytoplasm. It localises to the cytoskeleton. It is found in the spindle pole. Functionally, positively regulates the activity of the minus-end directed microtubule motor protein dynein. May enhance dynein-mediated microtubule sliding by targeting dynein to the microtubule plus end. Required for nuclear migration during vegetative growth as well as development. Required for retrograde early endosome (EE) transport from the hyphal tip. Required for localization of dynein to the mitotic spindle poles. Recruits additional proteins to the dynein complex at SPBs. The chain is Nuclear distribution protein PAC1-2 from Podospora anserina (strain S / ATCC MYA-4624 / DSM 980 / FGSC 10383) (Pleurage anserina).